Here is a 317-residue protein sequence, read N- to C-terminus: Transaldolase (317 aa).

The active-site Schiff-base intermediate with substrate is the K132.

This sequence belongs to the transaldolase family. Type 1 subfamily. In terms of assembly, homodimer.

The protein resides in the cytoplasm. It carries out the reaction D-sedoheptulose 7-phosphate + D-glyceraldehyde 3-phosphate = D-erythrose 4-phosphate + beta-D-fructose 6-phosphate. It participates in carbohydrate degradation; pentose phosphate pathway; D-glyceraldehyde 3-phosphate and beta-D-fructose 6-phosphate from D-ribose 5-phosphate and D-xylulose 5-phosphate (non-oxidative stage): step 2/3. Functionally, transaldolase is important for the balance of metabolites in the pentose-phosphate pathway. In Actinobacillus succinogenes (strain ATCC 55618 / DSM 22257 / CCUG 43843 / 130Z), this protein is Transaldolase.